A 101-amino-acid polypeptide reads, in one-letter code: Small ribosomal subunit protein bS6 (101 aa).

The protein belongs to the bacterial ribosomal protein bS6 family.

Its function is as follows. Binds together with bS18 to 16S ribosomal RNA. The polypeptide is Small ribosomal subunit protein bS6 (Arthrobacter sp. (strain FB24)).